Reading from the N-terminus, the 1218-residue chain is Cytosolic carboxypeptidase 1 (1218 aa).

Disordered stretches follow at residues 476 to 512 (VVMKERASPKGEEAKEDPKGHDRTLPQQLGGQSRVAP) and 590 to 617 (TEDDEDTESHSSTEQAPSVEASDGPTLH). Residues 477-499 (VMKERASPKGEEAKEDPKGHDRT) show a composition bias toward basic and acidic residues. A Peptidase M14 domain is found at 840 to 1130 (YPYTYSTLQM…KFCVGLLRLK (291 aa)). Positions 912, 915, and 1009 each coordinate Zn(2+). Glutamate 1094 serves as the catalytic Proton donor/acceptor. Position 1160 is a phosphoserine (serine 1160). The segment at 1193 to 1218 (ENTGDYEPSAQEEALSDSEVSRTHLI) is disordered.

This sequence belongs to the peptidase M14 family. As to quaternary structure, interacts with MYLK. It depends on Zn(2+) as a cofactor. In terms of tissue distribution, widely expressed. Highly expressed in the cerebellum and cortex of adult mouse brain. Expressed at similar levels in both the cerebellum and the cortex throughout all developmental stages. Also expressed in sciatic nerve transection, spinal motor neurons undergoing axon regeneration, testis, heart, eye, lung, pancreas, intestine, stomach, pituitary, spleen, adrenal, kidney and in developing brain. Expression in cranial motor nuclei is the same as that observed in uninjured primary motor neurons. Expression is prevalent in sensory neurons and hippocampal CA3 neurons in addition to regenerating motor neurons.

Its subcellular location is the cytoplasm. It is found in the cytosol. The protein resides in the nucleus. The protein localises to the mitochondrion. It catalyses the reaction (L-glutamyl)(n+1)-gamma-L-glutamyl-L-glutamyl-[protein] + H2O = (L-glutamyl)(n)-gamma-L-glutamyl-L-glutamyl-[protein] + L-glutamate. The enzyme catalyses C-terminal L-alpha-aminoacyl-L-glutamyl-L-glutamyl-[tubulin] + H2O = C-terminal L-alpha-aminoacyl-L-glutamyl-[tubulin] + L-glutamate. Its function is as follows. Metallocarboxypeptidase that mediates protein deglutamylation of tubulin and non-tubulin target proteins. Catalyzes the removal of polyglutamate side chains present on the gamma-carboxyl group of glutamate residues within the C-terminal tail of alpha- and beta-tubulin. Specifically cleaves tubulin long-side-chains, while it is not able to remove the branching point glutamate. Also catalyzes the removal of polyglutamate residues from the carboxy-terminus of alpha-tubulin as well as non-tubulin proteins such as MYLK. Involved in KLF4 deglutamylation which promotes KLF4 proteasome-mediated degradation, thereby negatively regulating cell pluripotency maintenance and embryogenesis. The polypeptide is Cytosolic carboxypeptidase 1 (Mus musculus (Mouse)).